A 304-amino-acid chain; its full sequence is tRNA dimethylallyltransferase (304 aa).

13–20 is a binding site for ATP; sequence GPTAAGKT. 15 to 20 serves as a coordination point for substrate; the sequence is TAAGKT. The interval 38–41 is interaction with substrate tRNA; the sequence is DSRQ.

The protein belongs to the IPP transferase family. In terms of assembly, monomer. Mg(2+) is required as a cofactor.

It carries out the reaction adenosine(37) in tRNA + dimethylallyl diphosphate = N(6)-dimethylallyladenosine(37) in tRNA + diphosphate. Functionally, catalyzes the transfer of a dimethylallyl group onto the adenine at position 37 in tRNAs that read codons beginning with uridine, leading to the formation of N6-(dimethylallyl)adenosine (i(6)A). The polypeptide is tRNA dimethylallyltransferase (Cytophaga hutchinsonii (strain ATCC 33406 / DSM 1761 / CIP 103989 / NBRC 15051 / NCIMB 9469 / D465)).